The following is a 465-amino-acid chain: Glutathione reductase (465 aa).

FAD-binding residues include Ser16 and Gly17. A glutathione-binding site is contributed by Ser16. Arg23 provides a ligand contact to glutathione. Positions 42, 49, 50, and 58 each coordinate FAD. Cysteines 50 and 55 form a disulfide. Position 108 (Tyr108) interacts with glutathione. FAD is bound at residue Gly124. Positions 187, 190, 193, 210, 216, and 276 each coordinate NADP(+). Asp318 lines the FAD pocket. Residue Leu324 participates in NADP(+) binding. Residue Thr326 participates in FAD binding. Residue Arg334 coordinates glutathione. Residue Val357 coordinates NADP(+). His454 lines the FAD pocket. The active-site Proton acceptor is the His454.

The protein belongs to the class-I pyridine nucleotide-disulfide oxidoreductase family. FAD is required as a cofactor.

The protein localises to the cytoplasm. It carries out the reaction 2 glutathione + NADP(+) = glutathione disulfide + NADPH + H(+). In terms of biological role, catalyzes the reduction of glutathione disulfide (GSSG) to reduced glutathione (GSH). Constitutes the major mechanism to maintain a high GSH:GSSG ratio in the cytosol. The amount of GSH may affect the determination of cell fate. This chain is Glutathione reductase (gsr), found in Dictyostelium discoideum (Social amoeba).